The chain runs to 235 residues: 5'-methylthioadenosine/S-adenosylhomocysteine nucleosidase (235 aa).

The active-site Proton acceptor is the glutamate 12. Substrate is bound by residues glycine 78, methionine 153, and 174-175 (ME). Residue aspartate 198 is the Proton donor of the active site.

It belongs to the PNP/UDP phosphorylase family. MtnN subfamily.

The enzyme catalyses S-adenosyl-L-homocysteine + H2O = S-(5-deoxy-D-ribos-5-yl)-L-homocysteine + adenine. It carries out the reaction S-methyl-5'-thioadenosine + H2O = 5-(methylsulfanyl)-D-ribose + adenine. It catalyses the reaction 5'-deoxyadenosine + H2O = 5-deoxy-D-ribose + adenine. The protein operates within amino-acid biosynthesis; L-methionine biosynthesis via salvage pathway; S-methyl-5-thio-alpha-D-ribose 1-phosphate from S-methyl-5'-thioadenosine (hydrolase route): step 1/2. In terms of biological role, catalyzes the irreversible cleavage of the glycosidic bond in both 5'-methylthioadenosine (MTA) and S-adenosylhomocysteine (SAH/AdoHcy) to adenine and the corresponding thioribose, 5'-methylthioribose and S-ribosylhomocysteine, respectively. Also cleaves 5'-deoxyadenosine, a toxic by-product of radical S-adenosylmethionine (SAM) enzymes, into 5-deoxyribose and adenine. The protein is 5'-methylthioadenosine/S-adenosylhomocysteine nucleosidase of Pseudoalteromonas translucida (strain TAC 125).